The sequence spans 284 residues: tRNA uridine(34) hydroxylase (284 aa).

One can recognise a Rhodanese domain in the interval 132–226 (TGRPVVMLDT…YFEEVGGAHY (95 aa)). The active-site Cysteine persulfide intermediate is the cysteine 186.

Belongs to the TrhO family.

The catalysed reaction is uridine(34) in tRNA + AH2 + O2 = 5-hydroxyuridine(34) in tRNA + A + H2O. Functionally, catalyzes oxygen-dependent 5-hydroxyuridine (ho5U) modification at position 34 in tRNAs. This Burkholderia cenocepacia (strain ATCC BAA-245 / DSM 16553 / LMG 16656 / NCTC 13227 / J2315 / CF5610) (Burkholderia cepacia (strain J2315)) protein is tRNA uridine(34) hydroxylase.